A 560-amino-acid chain; its full sequence is MTPQKSDACSDPVYTVGDYLLDRLAELGVSEIFGVPGDYNLQFLDHIVAHPTIRWVGSANELNAGYAADGYGRLRGMSAVVTTFGVGELSVTNAIAGSYAEHVPVVHIVGGPTKDAQGTRRALHHSLGDGDFEHFLRISREITCAQANLMPATAGREIDRVLSEVREQKRPGYILLSSDVARFPTEPPAAPLPRYPGGTSPRALSLFTKAAIELIADHQLTVLADLLVHRLQAVKELEALLAADVVPHATLMWGKSLLDESSPNFLGIYAGAASAERVRAAIEGAPVLVTAGVVFTDMVSGFFSQRIDPARTIDIGQYQSSVADQVFAPLEMSAALQALATILTGRGISSPPVVPPPAEPPPAMPARDEPLTQQMVWDRVCSALTPGNVVLADQGTSFYGMADHRLPQGVTFIGQPLWGSIGYTLPAAVGAAVAHPDRRTVLLIGDGAAQLTVQELGTFSREGLSPVIVVVNNDGYTVERAIHGETAPYNDIVSWNWTELPSALGVTNHLAFRAQTYGQLDDALTVAAARRDRMVLVEVVLPRLEIPRLLGQLVGSMAPQ.

Glu-61 contributes to the thiamine diphosphate binding site. Positions 396-478 (TSFYGMADHR…VVVNNDGYTV (83 aa)) are thiamine pyrophosphate binding. The Mg(2+) site is built by Asp-446, Asn-473, and Gly-475.

It belongs to the TPP enzyme family. The cofactor is a metal cation. Thiamine diphosphate serves as cofactor.

Its function is as follows. Decarboxylates branched-chain and aromatic alpha-keto acids to aldehydes. The chain is Alpha-keto-acid decarboxylase (kdc) from Mycobacterium bovis (strain ATCC BAA-935 / AF2122/97).